The following is a 356-amino-acid chain: Nicotinate-nucleotide--dimethylbenzimidazole phosphoribosyltransferase (356 aa).

Catalysis depends on glutamate 317, which acts as the Proton acceptor.

It belongs to the CobT family. In terms of assembly, homodimer.

The catalysed reaction is 5,6-dimethylbenzimidazole + nicotinate beta-D-ribonucleotide = alpha-ribazole 5'-phosphate + nicotinate + H(+). It participates in nucleoside biosynthesis; alpha-ribazole biosynthesis; alpha-ribazole from 5,6-dimethylbenzimidazole: step 1/2. Functionally, catalyzes the synthesis of alpha-ribazole-5'-phosphate from nicotinate mononucleotide (NAMN) and 5,6-dimethylbenzimidazole (DMB). The chain is Nicotinate-nucleotide--dimethylbenzimidazole phosphoribosyltransferase from Salmonella dublin (strain CT_02021853).